The following is a 577-amino-acid chain: 2-succinyl-5-enolpyruvyl-6-hydroxy-3-cyclohexene-1-carboxylate synthase (577 aa).

Belongs to the TPP enzyme family. MenD subfamily. In terms of assembly, homodimer. The cofactor is Mg(2+). Mn(2+) serves as cofactor. Thiamine diphosphate is required as a cofactor.

The catalysed reaction is isochorismate + 2-oxoglutarate + H(+) = 5-enolpyruvoyl-6-hydroxy-2-succinyl-cyclohex-3-ene-1-carboxylate + CO2. It participates in quinol/quinone metabolism; 1,4-dihydroxy-2-naphthoate biosynthesis; 1,4-dihydroxy-2-naphthoate from chorismate: step 2/7. Its pathway is cofactor biosynthesis; phylloquinone biosynthesis. Functionally, catalyzes the thiamine diphosphate-dependent decarboxylation of 2-oxoglutarate and the subsequent addition of the resulting succinic semialdehyde-thiamine pyrophosphate anion to isochorismate to yield 2-succinyl-5-enolpyruvyl-6-hydroxy-3-cyclohexene-1-carboxylate (SEPHCHC). The polypeptide is 2-succinyl-5-enolpyruvyl-6-hydroxy-3-cyclohexene-1-carboxylate synthase (Synechococcus sp. (strain CC9311)).